A 460-amino-acid polypeptide reads, in one-letter code: Ribosomal protein uS12 methylthiotransferase RimO (460 aa).

One can recognise an MTTase N-terminal domain in the interval 9–119 (PKVGFVSLGC…VMEAVHAALP (111 aa)). [4Fe-4S] cluster contacts are provided by Cys-18, Cys-54, Cys-83, Cys-150, Cys-154, and Cys-157. A Radical SAM core domain is found at 136-374 (LTPRHYAYLK…AKQAEISALR (239 aa)). The TRAM domain occupies 376–444 (EAKIGSVQQC…EHDLFGDALP (69 aa)).

This sequence belongs to the methylthiotransferase family. RimO subfamily. [4Fe-4S] cluster serves as cofactor.

It is found in the cytoplasm. It catalyses the reaction L-aspartate(89)-[ribosomal protein uS12]-hydrogen + (sulfur carrier)-SH + AH2 + 2 S-adenosyl-L-methionine = 3-methylsulfanyl-L-aspartate(89)-[ribosomal protein uS12]-hydrogen + (sulfur carrier)-H + 5'-deoxyadenosine + L-methionine + A + S-adenosyl-L-homocysteine + 2 H(+). Catalyzes the methylthiolation of an aspartic acid residue of ribosomal protein uS12. This Xanthomonas oryzae pv. oryzae (strain PXO99A) protein is Ribosomal protein uS12 methylthiotransferase RimO.